Consider the following 264-residue polypeptide: uncharacterized protein (264 aa).

A divalent metal cation contacts are provided by His7, His9, Glu102, His138, His163, and Asp213.

This sequence belongs to the metallo-dependent hydrolases superfamily. TatD-type hydrolase family. Requires a divalent metal cation as cofactor.

This is an uncharacterized protein from Buchnera aphidicola subsp. Acyrthosiphon pisum (strain APS) (Acyrthosiphon pisum symbiotic bacterium).